Reading from the N-terminus, the 434-residue chain is Na(+)/H(+) antiporter NhaA 1 (434 aa).

Positions 1–15 (MISPNPALPTPPHAP) are enriched in pro residues. Residues 1-21 (MISPNPALPTPPHAPTAPGRG) are disordered. 12 consecutive transmembrane segments (helical) span residues 34–54 (GGIL…SPAA), 74–94 (LSVS…VVGL), 112–132 (ALPI…FTLI), 143–163 (GWAI…AVVG), 173–193 (FLLT…AVFY), 196–216 (GIAF…GILV), 222–242 (AWYV…ASGI), 245–265 (TIAG…RAGV), 294–314 (IAVP…LEGL), 326–346 (IIVA…LLVA), 362–382 (VLGL…VGEL), and 393–413 (AVKV…GTLL).

The protein belongs to the NhaA Na(+)/H(+) (TC 2.A.33) antiporter family.

It is found in the cell membrane. It catalyses the reaction Na(+)(in) + 2 H(+)(out) = Na(+)(out) + 2 H(+)(in). In terms of biological role, na(+)/H(+) antiporter that extrudes sodium in exchange for external protons. This Clavibacter michiganensis subsp. michiganensis (strain NCPPB 382) protein is Na(+)/H(+) antiporter NhaA 1.